A 257-amino-acid chain; its full sequence is Pyridoxine 5'-phosphate synthase (257 aa).

A 3-amino-2-oxopropyl phosphate-binding site is contributed by Asn12. 14 to 15 contributes to the 1-deoxy-D-xylulose 5-phosphate binding site; sequence DH. Arg23 is a binding site for 3-amino-2-oxopropyl phosphate. His48 functions as the Proton acceptor in the catalytic mechanism. Positions 50 and 55 each coordinate 1-deoxy-D-xylulose 5-phosphate. Residue Glu75 is the Proton acceptor of the active site. 1-deoxy-D-xylulose 5-phosphate is bound at residue Thr105. The active-site Proton donor is the His199. Residues Gly200 and 221–222 each bind 3-amino-2-oxopropyl phosphate; that span reads GH.

Belongs to the PNP synthase family. In terms of assembly, homooctamer; tetramer of dimers.

It localises to the cytoplasm. It carries out the reaction 3-amino-2-oxopropyl phosphate + 1-deoxy-D-xylulose 5-phosphate = pyridoxine 5'-phosphate + phosphate + 2 H2O + H(+). It functions in the pathway cofactor biosynthesis; pyridoxine 5'-phosphate biosynthesis; pyridoxine 5'-phosphate from D-erythrose 4-phosphate: step 5/5. In terms of biological role, catalyzes the complicated ring closure reaction between the two acyclic compounds 1-deoxy-D-xylulose-5-phosphate (DXP) and 3-amino-2-oxopropyl phosphate (1-amino-acetone-3-phosphate or AAP) to form pyridoxine 5'-phosphate (PNP) and inorganic phosphate. This is Pyridoxine 5'-phosphate synthase from Xanthobacter autotrophicus (strain ATCC BAA-1158 / Py2).